A 598-amino-acid polypeptide reads, in one-letter code: UvrABC system protein C (598 aa).

One can recognise a GIY-YIG domain in the interval 14–91; sequence DSPGCYLHKD…IQKNMPKYNI (78 aa). In terms of domain architecture, UVR spans 196–231; it reads DKIIEDLRSKMLAASEEMAFERAAEYRDLISGIATM.

It belongs to the UvrC family. Interacts with UvrB in an incision complex.

It is found in the cytoplasm. Functionally, the UvrABC repair system catalyzes the recognition and processing of DNA lesions. UvrC both incises the 5' and 3' sides of the lesion. The N-terminal half is responsible for the 3' incision and the C-terminal half is responsible for the 5' incision. The polypeptide is UvrABC system protein C (Streptococcus pyogenes serotype M18 (strain MGAS8232)).